A 348-amino-acid polypeptide reads, in one-letter code: Dihydroorotase (348 aa).

Zn(2+) contacts are provided by histidine 13 and histidine 15. Substrate contacts are provided by residues 15–17 and asparagine 41; that span reads HLR. Zn(2+) contacts are provided by lysine 99, histidine 136, and histidine 174. An N6-carboxylysine modification is found at lysine 99. Histidine 136 is a substrate binding site. Leucine 219 serves as a coordination point for substrate. Aspartate 247 provides a ligand contact to Zn(2+). Aspartate 247 is a catalytic residue. Residues histidine 251 and alanine 263 each contribute to the substrate site.

It belongs to the metallo-dependent hydrolases superfamily. DHOase family. Class II DHOase subfamily. Homodimer. It depends on Zn(2+) as a cofactor.

The enzyme catalyses (S)-dihydroorotate + H2O = N-carbamoyl-L-aspartate + H(+). Its pathway is pyrimidine metabolism; UMP biosynthesis via de novo pathway; (S)-dihydroorotate from bicarbonate: step 3/3. Functionally, catalyzes the reversible cyclization of carbamoyl aspartate to dihydroorotate. In Rhizobium johnstonii (strain DSM 114642 / LMG 32736 / 3841) (Rhizobium leguminosarum bv. viciae), this protein is Dihydroorotase.